Reading from the N-terminus, the 471-residue chain is Trigger factor (471 aa).

One can recognise a PPIase FKBP-type domain in the interval 169-254 (EDRVTIDYLG…VKEVAKPNEL (86 aa)). The tract at residues 435-471 (VSKEELTAEDEDAASEAKPAKKAAAKKKAEEGKSEEA) is disordered. Residues 461–471 (KKAEEGKSEEA) are compositionally biased toward basic and acidic residues.

The protein belongs to the FKBP-type PPIase family. Tig subfamily.

It is found in the cytoplasm. It catalyses the reaction [protein]-peptidylproline (omega=180) = [protein]-peptidylproline (omega=0). Involved in protein export. Acts as a chaperone by maintaining the newly synthesized protein in an open conformation. Functions as a peptidyl-prolyl cis-trans isomerase. The polypeptide is Trigger factor (Brucella abortus (strain S19)).